The following is a 64-amino-acid chain: Putative antitoxin AF_1074 (64 aa).

The protein belongs to the UPF0165 family.

In terms of biological role, possibly the antitoxin component of a type II toxin-antitoxin (TA) system. This chain is Putative antitoxin AF_1074, found in Archaeoglobus fulgidus (strain ATCC 49558 / DSM 4304 / JCM 9628 / NBRC 100126 / VC-16).